Here is a 314-residue protein sequence, read N- to C-terminus: Protein OPG185 (314 aa).

A signal peptide spans M1 to A16. Residues T17–E121 form the Ig-like V-type domain. Residues T17–E278 are Virion surface-facing. Residues C34 and C103 are joined by a disulfide bond. N-linked (GlcNAc...) asparagine; by host glycosylation is found at N37, N69, N112, and N161. A compositionally biased stretch (polar residues) spans N193 to S202. Residues N193 to K214 form a disordered region. A glycan (N-linked (GlcNAc...) asparagine; by host) is linked at N253. Residues I279–N302 form a helical membrane-spanning segment. Residues K303–V314 are Intravirion-facing.

Belongs to the orthopoxvirus OPG185 family. Heterodimerizes with OPG040. The heterodimer OPG185-OPG040 interacts with components of the entry fusion complex OPG143 and OPG094. Heterodimer with C3/VPC protein; disulfide-linked. In terms of processing, glycosylated; contains phosphate and sulfate-substituted glycans. O-glycosylation is required for hemagglutination and hemadsorption activities of infected cell membranes.

The protein resides in the virion membrane. The protein localises to the host membrane. Its function is as follows. Prevents cell to cell fusion by interacting with and directing the viral OPG040 protein on the host plasma membrane. The OPG185-OPG040 complex associates with components of the entry fusion complex (EFC) presumably to avoid superinfection and syncytium formation. Via its interaction with C3/VCP protein, protects the infected cell and probably also the extracellular enveloped virus from complement attack. This Bos taurus (Bovine) protein is Protein OPG185 (OPG185).